A 264-amino-acid polypeptide reads, in one-letter code: Small ribosomal subunit protein uS2 (264 aa).

Acidic residues predominate over residues 243 to 253; sequence IEAAEDGEEVD. The tract at residues 243 to 264 is disordered; that stretch reads IEAAEDGEEVDNAQLTSSQGRS. The segment covering 255-264 has biased composition (polar residues); it reads AQLTSSQGRS.

This sequence belongs to the universal ribosomal protein uS2 family.

The sequence is that of Small ribosomal subunit protein uS2 from Deinococcus geothermalis (strain DSM 11300 / CIP 105573 / AG-3a).